The sequence spans 289 residues: NAD(P)H-hydrate epimerase (289 aa).

The region spanning 71–277 (AQTIDNELMS…SIVEKYNLKV (207 aa)) is the YjeF N-terminal domain. 122–126 (NNGGD) is a binding site for (6S)-NADPHX. K(+) is bound by residues asparagine 123 and aspartate 185. Residues 189-195 (GFSFTGE) and aspartate 218 contribute to the (6S)-NADPHX site. Serine 221 contributes to the K(+) binding site.

The protein belongs to the NnrE/AIBP family. K(+) is required as a cofactor.

It carries out the reaction (6R)-NADHX = (6S)-NADHX. It catalyses the reaction (6R)-NADPHX = (6S)-NADPHX. Its function is as follows. Catalyzes the epimerization of the S- and R-forms of NAD(P)HX, a damaged form of NAD(P)H that is a result of enzymatic or heat-dependent hydration. This is a prerequisite for the S-specific NAD(P)H-hydrate dehydratase to allow the repair of both epimers of NAD(P)HX. The sequence is that of NAD(P)H-hydrate epimerase from Plasmodium vivax (strain Salvador I).